Here is a 336-residue protein sequence, read N- to C-terminus: N-acetyl-gamma-glutamyl-phosphate reductase (336 aa).

Cys-156 is a catalytic residue.

This sequence belongs to the NAGSA dehydrogenase family. Type 1 subfamily.

It localises to the cytoplasm. The catalysed reaction is N-acetyl-L-glutamate 5-semialdehyde + phosphate + NADP(+) = N-acetyl-L-glutamyl 5-phosphate + NADPH + H(+). Its pathway is amino-acid biosynthesis; L-arginine biosynthesis; N(2)-acetyl-L-ornithine from L-glutamate: step 3/4. Its function is as follows. Catalyzes the NADPH-dependent reduction of N-acetyl-5-glutamyl phosphate to yield N-acetyl-L-glutamate 5-semialdehyde. The protein is N-acetyl-gamma-glutamyl-phosphate reductase of Moritella profunda.